A 480-amino-acid chain; its full sequence is V-type ATP synthase beta chain 2 (480 aa).

This sequence belongs to the ATPase alpha/beta chains family.

Its function is as follows. Produces ATP from ADP in the presence of a proton gradient across the membrane. The V-type beta chain is a regulatory subunit. The polypeptide is V-type ATP synthase beta chain 2 (atpB2) (Treponema pallidum (strain Nichols)).